The following is a 317-amino-acid chain: Beta-ketoacyl-[acyl-carrier-protein] synthase III (317 aa).

Residues Cys-112 and His-244 contribute to the active site. The segment at 245-249 is ACP-binding; it reads QANLR. Asn-274 is an active-site residue.

Belongs to the thiolase-like superfamily. FabH family. As to quaternary structure, homodimer.

Its subcellular location is the cytoplasm. It catalyses the reaction malonyl-[ACP] + acetyl-CoA + H(+) = 3-oxobutanoyl-[ACP] + CO2 + CoA. It functions in the pathway lipid metabolism; fatty acid biosynthesis. Catalyzes the condensation reaction of fatty acid synthesis by the addition to an acyl acceptor of two carbons from malonyl-ACP. Catalyzes the first condensation reaction which initiates fatty acid synthesis and may therefore play a role in governing the total rate of fatty acid production. Possesses both acetoacetyl-ACP synthase and acetyl transacylase activities. Its substrate specificity determines the biosynthesis of branched-chain and/or straight-chain of fatty acids. This chain is Beta-ketoacyl-[acyl-carrier-protein] synthase III, found in Salmonella paratyphi A (strain ATCC 9150 / SARB42).